The primary structure comprises 141 residues: Hemoglobin subunit alpha (141 aa).

The 141-residue stretch at 1 to 141 (VLSGTDKTNV…VGLVLTAKYR (141 aa)) folds into the Globin domain. O2 is bound at residue histidine 58. Histidine 87 contributes to the heme b binding site.

It belongs to the globin family. In terms of assembly, heterotetramer of two alpha chains and two beta chains. In terms of tissue distribution, red blood cells.

Its function is as follows. Involved in oxygen transport from the lung to the various peripheral tissues. The polypeptide is Hemoglobin subunit alpha (HBA) (Psittacula krameri (Rose-ringed parakeet)).